A 425-amino-acid polypeptide reads, in one-letter code: Serine--tRNA ligase (425 aa).

230-232 (TAE) contributes to the L-serine binding site. 261 to 263 (RSE) lines the ATP pocket. E284 lines the L-serine pocket. 348 to 351 (EISS) provides a ligand contact to ATP. Residue S384 coordinates L-serine.

This sequence belongs to the class-II aminoacyl-tRNA synthetase family. Type-1 seryl-tRNA synthetase subfamily. In terms of assembly, homodimer. The tRNA molecule binds across the dimer.

The protein resides in the cytoplasm. The enzyme catalyses tRNA(Ser) + L-serine + ATP = L-seryl-tRNA(Ser) + AMP + diphosphate + H(+). It catalyses the reaction tRNA(Sec) + L-serine + ATP = L-seryl-tRNA(Sec) + AMP + diphosphate + H(+). It participates in aminoacyl-tRNA biosynthesis; selenocysteinyl-tRNA(Sec) biosynthesis; L-seryl-tRNA(Sec) from L-serine and tRNA(Sec): step 1/1. In terms of biological role, catalyzes the attachment of serine to tRNA(Ser). Is also able to aminoacylate tRNA(Sec) with serine, to form the misacylated tRNA L-seryl-tRNA(Sec), which will be further converted into selenocysteinyl-tRNA(Sec). The protein is Serine--tRNA ligase of Streptococcus agalactiae serotype Ia (strain ATCC 27591 / A909 / CDC SS700).